The sequence spans 118 residues: Basic phospholipase A2 4 (118 aa).

7 disulfide bridges follow: Cys-11–Cys-71, Cys-27–Cys-117, Cys-29–Cys-45, Cys-44–Cys-98, Cys-51–Cys-91, Cys-60–Cys-84, and Cys-78–Cys-89. Ca(2+) contacts are provided by Tyr-28, Gly-30, and Gly-32. His-48 is a catalytic residue. A Ca(2+)-binding site is contributed by Asp-49. Asp-92 is an active-site residue.

Belongs to the phospholipase A2 family. Group I subfamily. D49 sub-subfamily. Monomer. It depends on Ca(2+) as a cofactor. As to expression, expressed by the venom gland.

It localises to the secreted. The enzyme catalyses a 1,2-diacyl-sn-glycero-3-phosphocholine + H2O = a 1-acyl-sn-glycero-3-phosphocholine + a fatty acid + H(+). In terms of biological role, PLA2 catalyzes the calcium-dependent hydrolysis of the 2-acyl groups in 3-sn-phosphoglycerides. This chain is Basic phospholipase A2 4, found in Laticauda semifasciata (Black-banded sea krait).